Here is a 976-residue protein sequence, read N- to C-terminus: Poly(ADP-ribose) glycohydrolase (976 aa).

The residue at position 1 (Met1) is an N-acetylmethionine. Residues 1-69 (MNAGPGCEPC…GRAGQHRGSA (69 aa)) are disordered. The segment at 1 to 456 (MNAGPGCEPC…LSPDKKWLGT (456 aa)) is A-domain. The Nuclear localization signal signature appears at 10–16 (CTKRPRW). Ser22 is modified (phosphoserine). A compositionally biased stretch (basic and acidic residues) spans 37-46 (RVLDPKDAHV). Ser68 is modified (phosphoserine). Positions 76–83 (QKTITSWM) match the PIP-box (PCNA interacting peptide) motif. 2 positions are modified to phosphoserine: Ser133 and Ser137. At Thr139 the chain carries Phosphothreonine. The segment at 183-350 (SNANIDRSPQ…PSRFQARDAD (168 aa)) is disordered. 2 stretches are compositionally biased toward basic and acidic residues: residues 191 to 206 (PQND…ENRD) and 222 to 233 (TTEDEQAREAKS). Ser197 carries the post-translational modification Phosphoserine. A Phosphothreonine modification is found at Thr199. 7 positions are modified to phosphoserine: Ser261, Ser264, Ser286, Ser291, Ser298, Ser302, and Ser316. A compositionally biased stretch (acidic residues) spans 316-331 (SEADEETSPGFDEQED). Positions 332–342 (GSSSQTANKPS) are enriched in polar residues. At Lys340 the chain carries N6-acetyllysine. Ser448 carries the phosphoserine modification. The interval 610–795 (QPIPLLKQKM…TEQYSEYTGY (186 aa)) is catalytic. 726 to 727 (IE) is a binding site for substrate. Asp737 is a catalytic residue. Residues Asn740 and Gln754 each contribute to the substrate site. Residues Glu755 and Glu756 contribute to the active site. Substrate is bound by residues Tyr795 and 869–874 (NWGCGA).

Belongs to the poly(ADP-ribose) glycohydrolase family. In terms of assembly, interacts with PCNA. Interacts with NUDT5. Ubiquitously expressed.

It localises to the nucleus. The protein resides in the cytoplasm. It is found in the mitochondrion. Its subcellular location is the mitochondrion matrix. The catalysed reaction is [(1''-&gt;2')-ADP-alpha-D-ribose](n) + H2O = [(1''-&gt;2')-ADP-alpha-D-ribose](n-1) + ADP-D-ribose. Its function is as follows. Poly(ADP-ribose) glycohydrolase that degrades poly(ADP-ribose) by hydrolyzing the ribose-ribose bonds present in poly(ADP-ribose). PARG acts both as an endo- and exoglycosidase, releasing poly(ADP-ribose) of different length as well as ADP-ribose monomers. It is however unable to cleave the ester bond between the terminal ADP-ribose and ADP-ribosylated residues, leaving proteins that are mono-ADP-ribosylated. Poly(ADP-ribose) is synthesized after DNA damage is only present transiently and is rapidly degraded by PARG. Required to prevent detrimental accumulation of poly(ADP-ribose) upon prolonged replicative stress, while it is not required for recovery from transient replicative stress. Responsible for the prevalence of mono-ADP-ribosylated proteins in cells, thanks to its ability to degrade poly(ADP-ribose) without cleaving the terminal protein-ribose bond. Required for retinoid acid-dependent gene transactivation, probably by removing poly(ADP-ribose) from histone demethylase KDM4D, allowing chromatin derepression at RAR-dependent gene promoters. Involved in the synthesis of ATP in the nucleus, together with PARP1, NMNAT1 and NUDT5. Nuclear ATP generation is required for extensive chromatin remodeling events that are energy-consuming. The sequence is that of Poly(ADP-ribose) glycohydrolase from Homo sapiens (Human).